Reading from the N-terminus, the 140-residue chain is Holo-[acyl-carrier-protein] synthase (140 aa).

Mg(2+) is bound by residues aspartate 8 and glutamate 62.

It belongs to the P-Pant transferase superfamily. AcpS family. Requires Mg(2+) as cofactor.

It localises to the cytoplasm. The enzyme catalyses apo-[ACP] + CoA = holo-[ACP] + adenosine 3',5'-bisphosphate + H(+). Functionally, transfers the 4'-phosphopantetheine moiety from coenzyme A to a Ser of acyl-carrier-protein. In Cupriavidus taiwanensis (strain DSM 17343 / BCRC 17206 / CCUG 44338 / CIP 107171 / LMG 19424 / R1) (Ralstonia taiwanensis (strain LMG 19424)), this protein is Holo-[acyl-carrier-protein] synthase.